Consider the following 289-residue polypeptide: Phosphatidylserine decarboxylase proenzyme (289 aa).

Active-site charge relay system; for autoendoproteolytic cleavage activity residues include D92, H149, and S254. S254 serves as the catalytic Schiff-base intermediate with substrate; via pyruvic acid; for decarboxylase activity. At S254 the chain carries Pyruvic acid (Ser); by autocatalysis.

The protein belongs to the phosphatidylserine decarboxylase family. PSD-B subfamily. Prokaryotic type I sub-subfamily. As to quaternary structure, heterodimer of a large membrane-associated beta subunit and a small pyruvoyl-containing alpha subunit. It depends on pyruvate as a cofactor. In terms of processing, is synthesized initially as an inactive proenzyme. Formation of the active enzyme involves a self-maturation process in which the active site pyruvoyl group is generated from an internal serine residue via an autocatalytic post-translational modification. Two non-identical subunits are generated from the proenzyme in this reaction, and the pyruvate is formed at the N-terminus of the alpha chain, which is derived from the carboxyl end of the proenzyme. The autoendoproteolytic cleavage occurs by a canonical serine protease mechanism, in which the side chain hydroxyl group of the serine supplies its oxygen atom to form the C-terminus of the beta chain, while the remainder of the serine residue undergoes an oxidative deamination to produce ammonia and the pyruvoyl prosthetic group on the alpha chain. During this reaction, the Ser that is part of the protease active site of the proenzyme becomes the pyruvoyl prosthetic group, which constitutes an essential element of the active site of the mature decarboxylase.

The protein localises to the cell membrane. The enzyme catalyses a 1,2-diacyl-sn-glycero-3-phospho-L-serine + H(+) = a 1,2-diacyl-sn-glycero-3-phosphoethanolamine + CO2. It functions in the pathway phospholipid metabolism; phosphatidylethanolamine biosynthesis; phosphatidylethanolamine from CDP-diacylglycerol: step 2/2. In terms of biological role, catalyzes the formation of phosphatidylethanolamine (PtdEtn) from phosphatidylserine (PtdSer). The protein is Phosphatidylserine decarboxylase proenzyme of Pseudomonas aeruginosa (strain LESB58).